We begin with the raw amino-acid sequence, 330 residues long: Fructose-1,6-bisphosphatase class 1 (330 aa).

Mg(2+)-binding residues include glutamate 84, aspartate 103, leucine 105, and aspartate 106. Residues 106–109, asparagine 196, and lysine 262 contribute to the substrate site; that span reads DGSS. Glutamate 268 is a binding site for Mg(2+).

Belongs to the FBPase class 1 family. As to quaternary structure, homotetramer. It depends on Mg(2+) as a cofactor.

It is found in the cytoplasm. It catalyses the reaction beta-D-fructose 1,6-bisphosphate + H2O = beta-D-fructose 6-phosphate + phosphate. Its pathway is carbohydrate biosynthesis; gluconeogenesis. The protein is Fructose-1,6-bisphosphatase class 1 of Shewanella sp. (strain ANA-3).